The chain runs to 551 residues: Palmdelphin (551 aa).

Position 1 is an N-acetylmethionine (M1). The stretch at 12–106 (QAITDKRKIQ…LQISTKEEAI (95 aa)) forms a coiled coil. K125 is covalently cross-linked (Glycyl lysine isopeptide (Lys-Gly) (interchain with G-Cter in SUMO2)). Residue S135 is modified to Phosphoserine. K179 participates in a covalent cross-link: Glycyl lysine isopeptide (Lys-Gly) (interchain with G-Cter in SUMO1); alternate. A Glycyl lysine isopeptide (Lys-Gly) (interchain with G-Cter in SUMO2); alternate cross-link involves residue K179. Over residues 248-259 (ERNSKSPTEYHE) the composition is skewed to basic and acidic residues. The disordered stretch occupies residues 248–280 (ERNSKSPTEYHEPVYANPFYRPTTPQRETVTPG). Over residues 270–280 (TTPQRETVTPG) the composition is skewed to polar residues. The residue at position 271 (T271) is a Phosphothreonine. 4 positions are modified to phosphoserine: S321, S370, S384, and S385. Disordered regions lie at residues 342–392 (TPQK…QEDE) and 449–535 (DEEE…EDPS). Basic and acidic residues predominate over residues 484–495 (KRSEASPHENTN). 3 positions are modified to phosphoserine: S498, S515, and S520.

It belongs to the paralemmin family. As to quaternary structure, interacts with GLUL. Post-translationally, phosphorylated. As to expression, ubiquitous. Most abundant in cardiac and skeletal muscle.

Its subcellular location is the cytoplasm. The protein localises to the cell projection. The protein resides in the dendrite. It is found in the dendritic spine. The sequence is that of Palmdelphin (PALMD) from Homo sapiens (Human).